Consider the following 240-residue polypeptide: Protein OPG176 (240 aa).

This sequence belongs to the orthopoxvirus OPG176 family. In terms of assembly, tetramer. Interacts with host MYD88, TRF4, TICAM2 and MAL.

BCL2-like protein which disrupts the host immune response by inhibiting the TLR4 signaling pathway leading to NF-kappa-B activation. Acts close to the plasma membrane and targets several host TIR-domain containing adapter proteins including MYD88, TIRAP, TRIF and TICAM2. In turn, blocks the host NF-kappa-B and TRIF-mediated IRF3 activation. This chain is Protein OPG176 (OPG176), found in Cynomys gunnisoni (Gunnison's prairie dog).